The chain runs to 112 residues: T cell receptor alpha variable 12-1 (112 aa).

The signal sequence occupies residues 1–20 (MISLRVLLVILWLQLSWVWS). An Ig-like domain is found at 23–112 (KEVEQDPGPF…DSATYLCVVN (90 aa)). Asparagine 43 is a glycosylation site (N-linked (GlcNAc...) asparagine). Cysteine 44 and cysteine 109 are joined by a disulfide.

In terms of assembly, alpha-beta TR is a heterodimer composed of an alpha and beta chain; disulfide-linked. The alpha-beta TR is associated with the transmembrane signaling CD3 coreceptor proteins to form the TR-CD3 (TcR or TCR). The assembly of alpha-beta TR heterodimers with CD3 occurs in the endoplasmic reticulum where a single alpha-beta TR heterodimer associates with one CD3D-CD3E heterodimer, one CD3G-CD3E heterodimer and one CD247 homodimer forming a stable octameric structure. CD3D-CD3E and CD3G-CD3E heterodimers preferentially associate with TR alpha and TR beta chains, respectively. The association of the CD247 homodimer is the last step of TcR assembly in the endoplasmic reticulum and is required for transport to the cell surface.

It is found in the cell membrane. Functionally, v region of the variable domain of T cell receptor (TR) alpha chain that participates in the antigen recognition. Alpha-beta T cell receptors are antigen specific receptors which are essential to the immune response and are present on the cell surface of T lymphocytes. Recognize peptide-major histocompatibility (MH) (pMH) complexes that are displayed by antigen presenting cells (APC), a prerequisite for efficient T cell adaptive immunity against pathogens. Binding of alpha-beta TR to pMH complex initiates TR-CD3 clustering on the cell surface and intracellular activation of LCK that phosphorylates the ITAM motifs of CD3G, CD3D, CD3E and CD247 enabling the recruitment of ZAP70. In turn ZAP70 phosphorylates LAT, which recruits numerous signaling molecules to form the LAT signalosome. The LAT signalosome propagates signal branching to three major signaling pathways, the calcium, the mitogen-activated protein kinase (MAPK) kinase and the nuclear factor NF-kappa-B (NF-kB) pathways, leading to the mobilization of transcription factors that are critical for gene expression and essential for T cell growth and differentiation. The T cell repertoire is generated in the thymus, by V-(D)-J rearrangement. This repertoire is then shaped by intrathymic selection events to generate a peripheral T cell pool of self-MH restricted, non-autoaggressive T cells. Post-thymic interaction of alpha-beta TR with the pMH complexes shapes TR structural and functional avidity. In Homo sapiens (Human), this protein is T cell receptor alpha variable 12-1.